The primary structure comprises 419 residues: Gamma-glutamyl phosphate reductase (419 aa).

Belongs to the gamma-glutamyl phosphate reductase family.

It localises to the cytoplasm. It catalyses the reaction L-glutamate 5-semialdehyde + phosphate + NADP(+) = L-glutamyl 5-phosphate + NADPH + H(+). It functions in the pathway amino-acid biosynthesis; L-proline biosynthesis; L-glutamate 5-semialdehyde from L-glutamate: step 2/2. Catalyzes the NADPH-dependent reduction of L-glutamate 5-phosphate into L-glutamate 5-semialdehyde and phosphate. The product spontaneously undergoes cyclization to form 1-pyrroline-5-carboxylate. The chain is Gamma-glutamyl phosphate reductase from Caulobacter sp. (strain K31).